The sequence spans 276 residues: Small ribosomal subunit protein uS2 (276 aa).

Residues 255–276 form a disordered region; it reads ASATATAAPTEAGAPEPTTDPS.

It belongs to the universal ribosomal protein uS2 family.

The sequence is that of Small ribosomal subunit protein uS2 from Mycolicibacterium paratuberculosis (strain ATCC BAA-968 / K-10) (Mycobacterium paratuberculosis).